The following is an 807-amino-acid chain: Microbial collagenase (807 aa).

The signal sequence occupies residues 1 to 27; it reads MSHLLPFPRRRLALACLLASISGASFG. H434 contacts Zn(2+). E435 is an active-site residue. H438 contributes to the Zn(2+) binding site. The segment at 562-585 is disordered; it reads EVTPENPDTDPDTPTEPSDGVTQL.

The protein belongs to the peptidase M9A family. It depends on Zn(2+) as a cofactor.

It is found in the secreted. It catalyses the reaction Digestion of native collagen in the triple helical region at Xaa-|-Gly bonds. With synthetic peptides, a preference is shown for Gly at P3 and P1', Pro and Ala at P2 and P2', and hydroxyproline, Ala or Arg at P3'.. In terms of biological role, possesses gelatinolytic activity. The chain is Microbial collagenase from Vibrio vulnificus (strain CMCP6).